The chain runs to 358 residues: MSDADLFSKLDGACDCKSLLKKHCTKERFDAVKDKKTKFGGTIGDCIKSGCLNLDSGVGIYACDPDAYTVFANVLDEVIKDYHKVDKLDHPEPDMGNFEDPGFGDLDPSGDFIVSTRVRVGRSHDSYGFPPVLSKDQIVKMEGDTKAAFEKFSGELAGKYYPLEGMSREESKQLTADHFLFKDDDRFLRDAGGYNNWPSGRGIFFNNNKTFLVWVNEEDHLRLISMQKGGNLAAVYRRLCQAITTMQNSGLSFAKREGLGYLTFCPSNLGTALRASVHMKVPNLAAKADEFKAICEKYNIQARGIHGEHTESEGGVYDLSNKRRLGLTEYQAVMEMKTGVEEILKREKELEGAKGAKK.

The Phosphagen kinase N-terminal domain occupies 2–84 (SDADLFSKLD…LDEVIKDYHK (83 aa)). A substrate-binding site is contributed by 57–61 (GVGIY). The 239-residue stretch at 112-350 (FIVSTRVRVG…EEILKREKEL (239 aa)) folds into the Phosphagen kinase C-terminal domain. ATP contacts are provided by residues 115-119 (STRVR) and His178. Substrate is bound at residue Glu218. Arg222 is an ATP binding site. Cys265 provides a ligand contact to substrate. Residues 274–278 (RASVH) and 303–308 (RGIHGE) each bind ATP. Glu308 contacts substrate.

The protein belongs to the ATP:guanido phosphotransferase family.

The enzyme catalyses L-arginine + ATP = N(omega)-phospho-L-arginine + ADP + H(+). The polypeptide is Arginine kinase (Turbo cornutus (Horned turban)).